Here is a 125-residue protein sequence, read N- to C-terminus: Fluoride-specific ion channel FluC (125 aa).

The next 4 membrane-spanning stretches (helical) occupy residues 5–25 (ILAI…LALW), 37–57 (LAAN…FHLL), 71–91 (GFLG…TMLL), and 97–117 (VALL…WLGI). Na(+) contacts are provided by Gly-74 and Thr-77.

This sequence belongs to the fluoride channel Fluc/FEX (TC 1.A.43) family.

The protein resides in the cell inner membrane. It catalyses the reaction fluoride(in) = fluoride(out). With respect to regulation, na(+) is not transported, but it plays an essential structural role and its presence is essential for fluoride channel function. Functionally, fluoride-specific ion channel. Important for reducing fluoride concentration in the cell, thus reducing its toxicity. This Variovorax paradoxus (strain S110) protein is Fluoride-specific ion channel FluC.